Here is a 641-residue protein sequence, read N- to C-terminus: Bifunctional protein glk (641 aa).

A glucokinase region spans residues 1–340 (MSTGAQTKAA…QLSNRTGGAS (340 aa)). An ATP-binding site is contributed by 23 to 28 (ADVGGT). An HTH rpiR-type domain is found at 341–417 (SAVFERIRQM…LKLATGLTGT (77 aa)). The interval 341–641 (SAVFERIRQM…SHGAAPAAKD (301 aa)) is putative HTH-type transcriptional regulator. Positions 377-396 (IVDIARKADVSQPTVIRFCR) form a DNA-binding region, H-T-H motif. In terms of domain architecture, SIS spans 461–600 (AIDILNNARR…AVGVAIRRAA (140 aa)). Residues 576–596 (SMISRILHLVMIDILAVGVAI) form a helical membrane-spanning segment.

The protein in the N-terminal section; belongs to the bacterial glucokinase family.

Its subcellular location is the membrane. The catalysed reaction is D-glucose + ATP = D-glucose 6-phosphate + ADP + H(+). The chain is Bifunctional protein glk (glk) from Burkholderia pseudomallei (strain 1710b).